Here is a 117-residue protein sequence, read N- to C-terminus: Large ribosomal subunit protein bL20c (117 aa).

This sequence belongs to the bacterial ribosomal protein bL20 family.

It is found in the plastid. The protein localises to the chloroplast. Its function is as follows. Binds directly to 23S ribosomal RNA and is necessary for the in vitro assembly process of the 50S ribosomal subunit. It is not involved in the protein synthesizing functions of that subunit. This Olimarabidopsis pumila (Dwarf rocket) protein is Large ribosomal subunit protein bL20c.